Reading from the N-terminus, the 369-residue chain is Endoglucanase (369 aa).

A signal peptide spans 1-22; that stretch reads MMTMLRGWITMIVMLTAINAQA. Glu56 acts as the Proton donor in catalysis. Catalysis depends on Asp117, which acts as the Nucleophile.

This sequence belongs to the glycosyl hydrolase 8 (cellulase D) family.

It is found in the secreted. The enzyme catalyses Endohydrolysis of (1-&gt;4)-beta-D-glucosidic linkages in cellulose, lichenin and cereal beta-D-glucans.. The protein operates within glycan metabolism; bacterial cellulose biosynthesis. Hydrolyzes carboxymethylcellulose. In Salmonella typhi, this protein is Endoglucanase (bcsZ).